The sequence spans 342 residues: N-acetyl-gamma-glutamyl-phosphate reductase (342 aa).

The active site involves C149.

It belongs to the NAGSA dehydrogenase family. Type 1 subfamily.

It is found in the cytoplasm. The enzyme catalyses N-acetyl-L-glutamate 5-semialdehyde + phosphate + NADP(+) = N-acetyl-L-glutamyl 5-phosphate + NADPH + H(+). It participates in amino-acid biosynthesis; L-arginine biosynthesis; N(2)-acetyl-L-ornithine from L-glutamate: step 3/4. Functionally, catalyzes the NADPH-dependent reduction of N-acetyl-5-glutamyl phosphate to yield N-acetyl-L-glutamate 5-semialdehyde. The sequence is that of N-acetyl-gamma-glutamyl-phosphate reductase from Cereibacter sphaeroides (strain ATCC 17029 / ATH 2.4.9) (Rhodobacter sphaeroides).